The following is a 388-amino-acid chain: Chorismate synthase (388 aa).

NADP(+) contacts are provided by R39 and R45. FMN contacts are provided by residues 130–132 (RSS), 251–252 (NA), G296, 311–315 (KPIPT), and R337.

It belongs to the chorismate synthase family. In terms of assembly, homotetramer. The cofactor is FMNH2.

It catalyses the reaction 5-O-(1-carboxyvinyl)-3-phosphoshikimate = chorismate + phosphate. It functions in the pathway metabolic intermediate biosynthesis; chorismate biosynthesis; chorismate from D-erythrose 4-phosphate and phosphoenolpyruvate: step 7/7. Functionally, catalyzes the anti-1,4-elimination of the C-3 phosphate and the C-6 proR hydrogen from 5-enolpyruvylshikimate-3-phosphate (EPSP) to yield chorismate, which is the branch point compound that serves as the starting substrate for the three terminal pathways of aromatic amino acid biosynthesis. This reaction introduces a second double bond into the aromatic ring system. In Lactococcus lactis subsp. cremoris (strain SK11), this protein is Chorismate synthase.